The chain runs to 397 residues: Acetate kinase (397 aa).

Asn8 serves as a coordination point for Mg(2+). Residue Lys15 coordinates ATP. Arg89 is a binding site for substrate. Asp146 acts as the Proton donor/acceptor in catalysis. ATP contacts are provided by residues 206–210, 280–282, and 328–332; these read HLGNG, DMR, and GVGEN. Glu382 is a binding site for Mg(2+).

This sequence belongs to the acetokinase family. As to quaternary structure, homodimer. It depends on Mg(2+) as a cofactor. The cofactor is Mn(2+).

It is found in the cytoplasm. It carries out the reaction acetate + ATP = acetyl phosphate + ADP. It functions in the pathway metabolic intermediate biosynthesis; acetyl-CoA biosynthesis; acetyl-CoA from acetate: step 1/2. Its function is as follows. Catalyzes the formation of acetyl phosphate from acetate and ATP. Can also catalyze the reverse reaction. The polypeptide is Acetate kinase (Leifsonia xyli subsp. xyli (strain CTCB07)).